The primary structure comprises 245 residues: MFEELRPHLIELRKRLFISVACIVVMFIVCFALRSYILDILKAPLIAVLPEVAKHVNVIEVQEALFTAMKVSFFAAFIFSLPVIFWQFWKFVAPGLYDNEKRLVVPFVSFASIMFAFGACFCYFVVVPLAFKFLINFGLNEDFNPVITIGTYVDFFTKVVVAFGLAFEMPVIAFFFAKIGLIDDSFLKRHFRIAVLVIFVFSAFMTPPDVLSQFLMAGPLCGLYGLSILIVQKVNPAPKDKESDE.

6 helical membrane-spanning segments follow: residues 17–37 (FISV…RSYI), 73–93 (FFAA…KFVA), 107–127 (FVSF…FVVV), 159–179 (VVVA…FAKI), 191–207 (FRIA…FMTP), and 210–230 (VLSQ…SILI).

It belongs to the TatC family. The Tat system comprises two distinct complexes: a TatABC complex, containing multiple copies of TatA, TatB and TatC subunits, and a separate TatA complex, containing only TatA subunits. Substrates initially bind to the TatABC complex, which probably triggers association of the separate TatA complex to form the active translocon.

The protein resides in the cell inner membrane. In terms of biological role, part of the twin-arginine translocation (Tat) system that transports large folded proteins containing a characteristic twin-arginine motif in their signal peptide across membranes. Together with TatB, TatC is part of a receptor directly interacting with Tat signal peptides. The polypeptide is Sec-independent protein translocase protein TatC (Campylobacter jejuni subsp. jejuni serotype O:2 (strain ATCC 700819 / NCTC 11168)).